The primary structure comprises 90 residues: uncharacterized protein (90 aa).

The signal sequence occupies residues 1–18 (MKTLPVLVLSLTLLTVFS). Residues 28–50 (QAKQLLRSRRQDRPSKPGFPDEP) are disordered.

The protein localises to the secreted. This is an uncharacterized protein from Homo sapiens (Human).